Reading from the N-terminus, the 83-residue chain is Weak toxin DE-1 (83 aa).

The first 21 residues, 1 to 21 (MKTLLLTLVVVTIVCLDLGYS), serve as a signal peptide directing secretion. 4 disulfides stabilise this stretch: Cys-24/Cys-45, Cys-38/Cys-62, Cys-64/Cys-75, and Cys-76/Cys-81.

The protein belongs to the three-finger toxin family. Short-chain subfamily. Type I alpha-neurotoxin sub-subfamily. Expressed by the venom gland.

It is found in the secreted. The protein is Weak toxin DE-1 of Ophiophagus hannah (King cobra).